The primary structure comprises 339 residues: UPF0324 membrane protein M6_Spy0799 (339 aa).

The next 9 membrane-spanning stretches (helical) occupy residues 7-24, 28-50, 57-79, 84-106, 118-140, 150-172, 256-275, 290-307, and 314-336; these read KLPGLLLCLLLALPAWYL, FPIIGAPVFAILLGMLLALFYEH, GISFTSKYILQTAVVLLGFGLNL, AVGMQSLPIIISTIATALLVAYG, ATLVGVGSSICGGSAIAATAPVI, AISVIFLFNMLAALLFPSLGQLL, FILFFLLASLITTLMISLGV, FIVMAMAAIGLNTNLVKL, and AILLGAICWVAITLVSLAMQLSL.

It belongs to the UPF0324 family.

It is found in the cell membrane. This is UPF0324 membrane protein M6_Spy0799 from Streptococcus pyogenes serotype M6 (strain ATCC BAA-946 / MGAS10394).